A 75-amino-acid chain; its full sequence is Cytochrome c oxidase subunit 6C (75 aa).

The Mitochondrial matrix segment spans residues 1 to 13 (MASSALAKPQMRG). The chain crosses the membrane as a helical span at residues 14-54 (LLARRLRIHIVGAFVVSLGVAAFYKYAVAEPRKKAYADFYR). At 55 to 75 (NYDSVKYFEEMRKAGVFQSVK) the chain is on the mitochondrial intermembrane side.

This sequence belongs to the cytochrome c oxidase subunit 6c family. As to quaternary structure, component of the cytochrome c oxidase (complex IV, CIV), a multisubunit enzyme composed of 14 subunits. The complex is composed of a catalytic core of 3 subunits MT-CO1, MT-CO2 and MT-CO3, encoded in the mitochondrial DNA, and 11 supernumerary subunits COX4I, COX5A, COX5B, COX6A, COX6B, COX6C, COX7A, COX7B, COX7C, COX8 and NDUFA4, which are encoded in the nuclear genome. The complex exists as a monomer or a dimer and forms supercomplexes (SCs) in the inner mitochondrial membrane with NADH-ubiquinone oxidoreductase (complex I, CI) and ubiquinol-cytochrome c oxidoreductase (cytochrome b-c1 complex, complex III, CIII), resulting in different assemblies (supercomplex SCI(1)III(2)IV(1) and megacomplex MCI(2)III(2)IV(2)).

Its subcellular location is the mitochondrion inner membrane. It participates in energy metabolism; oxidative phosphorylation. Its function is as follows. Component of the cytochrome c oxidase, the last enzyme in the mitochondrial electron transport chain which drives oxidative phosphorylation. The respiratory chain contains 3 multisubunit complexes succinate dehydrogenase (complex II, CII), ubiquinol-cytochrome c oxidoreductase (cytochrome b-c1 complex, complex III, CIII) and cytochrome c oxidase (complex IV, CIV), that cooperate to transfer electrons derived from NADH and succinate to molecular oxygen, creating an electrochemical gradient over the inner membrane that drives transmembrane transport and the ATP synthase. Cytochrome c oxidase is the component of the respiratory chain that catalyzes the reduction of oxygen to water. Electrons originating from reduced cytochrome c in the intermembrane space (IMS) are transferred via the dinuclear copper A center (CU(A)) of subunit 2 and heme A of subunit 1 to the active site in subunit 1, a binuclear center (BNC) formed by heme A3 and copper B (CU(B)). The BNC reduces molecular oxygen to 2 water molecules using 4 electrons from cytochrome c in the IMS and 4 protons from the mitochondrial matrix. This chain is Cytochrome c oxidase subunit 6C (COX6C), found in Nycticebus coucang (Slow loris).